Reading from the N-terminus, the 553-residue chain is Dihydroxy-acid dehydratase (553 aa).

Cys-49 is a binding site for [2Fe-2S] cluster. Asp-81 lines the Mg(2+) pocket. Cys-122 provides a ligand contact to [2Fe-2S] cluster. 2 residues coordinate Mg(2+): Asp-123 and Lys-124. Lys-124 is modified (N6-carboxylysine). Cys-194 contacts [2Fe-2S] cluster. Glu-444 contacts Mg(2+). Ser-470 serves as the catalytic Proton acceptor.

This sequence belongs to the IlvD/Edd family. In terms of assembly, homodimer. [2Fe-2S] cluster is required as a cofactor. Mg(2+) serves as cofactor.

The catalysed reaction is (2R)-2,3-dihydroxy-3-methylbutanoate = 3-methyl-2-oxobutanoate + H2O. The enzyme catalyses (2R,3R)-2,3-dihydroxy-3-methylpentanoate = (S)-3-methyl-2-oxopentanoate + H2O. It functions in the pathway amino-acid biosynthesis; L-isoleucine biosynthesis; L-isoleucine from 2-oxobutanoate: step 3/4. The protein operates within amino-acid biosynthesis; L-valine biosynthesis; L-valine from pyruvate: step 3/4. Functions in the biosynthesis of branched-chain amino acids. Catalyzes the dehydration of (2R,3R)-2,3-dihydroxy-3-methylpentanoate (2,3-dihydroxy-3-methylvalerate) into 2-oxo-3-methylpentanoate (2-oxo-3-methylvalerate) and of (2R)-2,3-dihydroxy-3-methylbutanoate (2,3-dihydroxyisovalerate) into 2-oxo-3-methylbutanoate (2-oxoisovalerate), the penultimate precursor to L-isoleucine and L-valine, respectively. In Aeropyrum pernix (strain ATCC 700893 / DSM 11879 / JCM 9820 / NBRC 100138 / K1), this protein is Dihydroxy-acid dehydratase.